The sequence spans 675 residues: Putative exonuclease GOR (675 aa).

The span at 66–79 (VAKEAAPEASRHLG) shows a compositional bias: basic and acidic residues. Disordered regions lie at residues 66-90 (VAKEAAPEASRHLGAEQSPAGAPEG) and 225-263 (AKRTRVASSSQRSRGSKVGRQPGKTRNRSGMACKTTATT). The tract at residues 358–483 (MPGLSRAALY…VRDGRKESLD (126 aa)) is GOR1-125 epitope.

The protein belongs to the REXO1/REXO3 family.

It is found in the cytoplasm. It localises to the nucleus. In Homo sapiens (Human), this protein is Putative exonuclease GOR (REXO1L1P).